Here is a 62-residue protein sequence, read N- to C-terminus: Short neurotoxin A (62 aa).

Positions 1–16 (RRCFNHPSSQPQTNKS) are enriched in polar residues. The tract at residues 1-21 (RRCFNHPSSQPQTNKSCPPGE) is disordered. 4 cysteine pairs are disulfide-bonded: C3–C24, C17–C41, C43–C54, and C55–C60.

This sequence belongs to the three-finger toxin family. Short-chain subfamily. Type I alpha-neurotoxin sub-subfamily. Expressed by the venom gland.

Its subcellular location is the secreted. Functionally, binds to muscle nicotinic acetylcholine receptor (nAChR) and inhibit acetylcholine from binding to the receptor, thereby impairing neuromuscular transmission. The chain is Short neurotoxin A from Laticauda crockeri (Crocker's sea snake).